We begin with the raw amino-acid sequence, 146 residues long: Flavodoxin (146 aa).

Positions 4–143 (ALIVYGSTTG…EVLDWAREVL (140 aa)) constitute a Flavodoxin-like domain.

This sequence belongs to the flavodoxin family. FMN serves as cofactor.

Its function is as follows. Electron-transfer proteins that function in various electron transport systems in microorganisms. Functionally interchangeable with ferredoxin. This chain is Flavodoxin, found in Megalodesulfovibrio gigas (strain ATCC 19364 / DSM 1382 / NCIMB 9332 / VKM B-1759) (Desulfovibrio gigas).